The chain runs to 608 residues: Developmental regulatory protein wetA (608 aa).

Disordered stretches follow at residues 54–88 (ADHH…GVST), 102–125 (VDAT…VDPR), 146–186 (VSMS…MTRK), 202–226 (SKLR…NPPR), 309–352 (WPHQ…HAVP), 447–544 (AQTY…GDIG), and 556–576 (LMTG…EREA). Composition is skewed to low complexity over residues 77-88 (ESTASASSGVST), 107-119 (PSQP…PGAS), and 163-175 (SSPG…SQPS). Positions 313–338 (QHPHPHPHPHHPQAHTHPHPHPHPHP) are enriched in basic residues. Composition is skewed to low complexity over residues 339–350 (HQQAVAGHPQHA) and 502–517 (SSNG…SGRG).

This sequence belongs to the wetA family.

AbaA and wetA are pivotal regulators of conidiophore development and conidium maturation. They act individually and together to regulate their own expression and that of numerous other sporulation-specific genes. Functions to maintain conidial dormancy by suppressing microcycle conidiation. The polypeptide is Developmental regulatory protein wetA (Gibberella zeae (strain ATCC MYA-4620 / CBS 123657 / FGSC 9075 / NRRL 31084 / PH-1) (Wheat head blight fungus)).